We begin with the raw amino-acid sequence, 121 residues long: Small ribosomal subunit protein uS13 (121 aa).

Residues 91-121 (HRMSLPVRGQRTRTNARTRRGSRKTVAGRKK) are disordered. Over residues 100-121 (QRTRTNARTRRGSRKTVAGRKK) the composition is skewed to basic residues.

Belongs to the universal ribosomal protein uS13 family. As to quaternary structure, part of the 30S ribosomal subunit. Forms a loose heterodimer with protein S19. Forms two bridges to the 50S subunit in the 70S ribosome.

In terms of biological role, located at the top of the head of the 30S subunit, it contacts several helices of the 16S rRNA. In the 70S ribosome it contacts the 23S rRNA (bridge B1a) and protein L5 of the 50S subunit (bridge B1b), connecting the 2 subunits; these bridges are implicated in subunit movement. Contacts the tRNAs in the A and P-sites. This chain is Small ribosomal subunit protein uS13, found in Prochlorococcus marinus (strain MIT 9515).